Here is a 201-residue protein sequence, read N- to C-terminus: Imidazole glycerol phosphate synthase subunit HisH (201 aa).

The Glutamine amidotransferase type-1 domain maps to 1–201 (MVFIADYGAG…LQVLKNFAEF (201 aa)). The active-site Nucleophile is the Cys-79. Residues His-183 and Glu-185 contribute to the active site.

In terms of assembly, heterodimer of HisH and HisF.

It is found in the cytoplasm. It catalyses the reaction 5-[(5-phospho-1-deoxy-D-ribulos-1-ylimino)methylamino]-1-(5-phospho-beta-D-ribosyl)imidazole-4-carboxamide + L-glutamine = D-erythro-1-(imidazol-4-yl)glycerol 3-phosphate + 5-amino-1-(5-phospho-beta-D-ribosyl)imidazole-4-carboxamide + L-glutamate + H(+). It carries out the reaction L-glutamine + H2O = L-glutamate + NH4(+). The protein operates within amino-acid biosynthesis; L-histidine biosynthesis; L-histidine from 5-phospho-alpha-D-ribose 1-diphosphate: step 5/9. In terms of biological role, IGPS catalyzes the conversion of PRFAR and glutamine to IGP, AICAR and glutamate. The HisH subunit catalyzes the hydrolysis of glutamine to glutamate and ammonia as part of the synthesis of IGP and AICAR. The resulting ammonia molecule is channeled to the active site of HisF. This chain is Imidazole glycerol phosphate synthase subunit HisH, found in Chlorobaculum tepidum (strain ATCC 49652 / DSM 12025 / NBRC 103806 / TLS) (Chlorobium tepidum).